Consider the following 225-residue polypeptide: uncharacterized protein (225 aa).

The protein belongs to the mimivirus L31/R44 family.

This is an uncharacterized protein from Acanthamoeba polyphaga (Amoeba).